Here is a 1003-residue protein sequence, read N- to C-terminus: Cation-transporting ATPase HMA5 (1003 aa).

The tract at residues 6 to 25 is disordered; the sequence is LSAVAGGGRPAAAGGGGDEM. The segment covering 10 to 22 has biased composition (gly residues); sequence AGGGRPAAAGGGG. HMA domains follow at residues 51–117, 133–199, and 207–273; these read EEAH…FDAE, LSAQ…FEAA, and DKIL…NGRL. Cu cation contacts are provided by cysteine 62, cysteine 65, cysteine 144, and cysteine 147. The next 8 membrane-spanning stretches (helical) occupy residues 302–322, 331–351, 372–392, 396–416, 562–582, 599–619, 938–958, and 966–986; these read SLFL…IPFI, GPFH…QFVV, VLVV…LLYG, GFHP…VLFG, IFVP…FLCG, FVFS…CALG, FFAM…LFPF, and WLAG…SLLL.

This sequence belongs to the cation transport ATPase (P-type) (TC 3.A.3) family. Type IB subfamily. Expressed in root vascular cylinder, vascular bundles and mesophyll cells of leaf blades, and anther walls and microspores of stamens.

Its subcellular location is the cell membrane. Functionally, metal efflux transporter that may play a role in detoxification of heavy metals, such as zinc, copper, lead and cadmium, especially in the shoots. This chain is Cation-transporting ATPase HMA5, found in Oryza sativa subsp. japonica (Rice).